Consider the following 317-residue polypeptide: Aspartate carbamoyltransferase catalytic subunit (317 aa).

The carbamoyl phosphate site is built by Arg-66 and Thr-67. Position 94 (Lys-94) interacts with L-aspartate. The carbamoyl phosphate site is built by Arg-116, His-144, and Gln-147. Positions 177 and 231 each coordinate L-aspartate. Carbamoyl phosphate contacts are provided by Gly-272 and Pro-273.

Belongs to the aspartate/ornithine carbamoyltransferase superfamily. ATCase family. In terms of assembly, heterododecamer (2C3:3R2) of six catalytic PyrB chains organized as two trimers (C3), and six regulatory PyrI chains organized as three dimers (R2).

The enzyme catalyses carbamoyl phosphate + L-aspartate = N-carbamoyl-L-aspartate + phosphate + H(+). It participates in pyrimidine metabolism; UMP biosynthesis via de novo pathway; (S)-dihydroorotate from bicarbonate: step 2/3. In terms of biological role, catalyzes the condensation of carbamoyl phosphate and aspartate to form carbamoyl aspartate and inorganic phosphate, the committed step in the de novo pyrimidine nucleotide biosynthesis pathway. The sequence is that of Aspartate carbamoyltransferase catalytic subunit from Bradyrhizobium sp. (strain BTAi1 / ATCC BAA-1182).